A 229-amino-acid chain; its full sequence is Potassium/proton antiporter CemA (229 aa).

A run of 4 helical transmembrane segments spans residues 7-27, 106-126, 154-174, and 189-209; these read LASL…SLSF, IILH…YFFL, ILLV…ELMI, and IISG…KYWI.

The protein belongs to the CemA family.

Its subcellular location is the plastid. The protein localises to the chloroplast inner membrane. It carries out the reaction K(+)(in) + H(+)(out) = K(+)(out) + H(+)(in). Functionally, contributes to K(+)/H(+) antiport activity by supporting proton efflux to control proton extrusion and homeostasis in chloroplasts in a light-dependent manner to modulate photosynthesis. Prevents excessive induction of non-photochemical quenching (NPQ) under continuous-light conditions. Indirectly promotes efficient inorganic carbon uptake into chloroplasts. The chain is Potassium/proton antiporter CemA from Phalaenopsis aphrodite subsp. formosana (Moth orchid).